The chain runs to 516 residues: Flavin-dependent halogenase armH2 (516 aa).

3 residues coordinate FAD: Gly16, Ala19, and Glu49. 2 residues coordinate chloride: Ser328 and Gly329. Ile330 is an FAD binding site. Residues 440–475 (PQANGNGAAKQDAVPAPIPVALSSGAGPEKDAKRRE) form a disordered region.

This sequence belongs to the flavin-dependent halogenase family.

It catalyses the reaction melleolide F + FADH2 + chloride + O2 = 6'-chloromelleolide F + FAD + 2 H2O + H(+). Functionally, flavin-dependent halogenase involved in the biosynthesis of melleolides, a range of antifungal and phytotoxic polyketide derivatives composed of an orsellinic acid (OA) moiety esterified to various sesquiterpene alcohols. The halogenase catalyzes the transfer of a single chlorine atom to the melleolide backbone, resulting in a 6'-chloromelleolide product. The enzyme acts on free substrate and does not depend on carrier-protein-dependent acceptor molecules. The polypeptide is Flavin-dependent halogenase armH2 (Armillaria mellea (Honey mushroom)).